A 538-amino-acid polypeptide reads, in one-letter code: Putative cysteine ligase BshC (538 aa).

A coiled-coil region spans residues 460 to 484 (KINEQIELLERMLKRNVEKKHEVEL).

This sequence belongs to the BshC family.

Involved in bacillithiol (BSH) biosynthesis. May catalyze the last step of the pathway, the addition of cysteine to glucosamine malate (GlcN-Mal) to generate BSH. The polypeptide is Putative cysteine ligase BshC (Bacillus thuringiensis (strain Al Hakam)).